The primary structure comprises 416 residues: Phosphoglycerate kinase (416 aa).

(2R)-3-phosphoglycerate contacts are provided by valine 23, aspartate 24, phenylalanine 25, asparagine 26, glutamine 38, arginine 39, serine 62, histidine 63, glycine 65, arginine 66, leucine 121, arginine 122, histidine 168, and arginine 169. Position 212 (glycine 212) interacts with ADP. Glycine 212 provides a ligand contact to CDP. AMP-binding residues include alanine 213 and lysine 214. Alanine 213 contributes to the ATP binding site. Alanine 213 is a Mg(2+) binding site. Aspartate 217 is a binding site for CDP. Aspartate 217 provides a ligand contact to Mg(2+). Lysine 218 is a binding site for AMP. Lysine 218 is an ATP binding site. Glycine 236 lines the ADP pocket. Position 236 (glycine 236) interacts with CDP. AMP-binding residues include glycine 237 and glycine 311. Positions 237 and 311 each coordinate ATP. The CDP site is built by glycine 336 and phenylalanine 341. Position 341 (phenylalanine 341) interacts with ADP. Glutamate 342 lines the AMP pocket. ATP contacts are provided by glutamate 342, aspartate 373, and threonine 374. Aspartate 373 serves as a coordination point for Mg(2+).

This sequence belongs to the phosphoglycerate kinase family. In terms of assembly, monomer. Mg(2+) serves as cofactor.

The protein localises to the cytoplasm. Its subcellular location is the mitochondrion. It catalyses the reaction (2R)-3-phosphoglycerate + ATP = (2R)-3-phospho-glyceroyl phosphate + ADP. Its pathway is carbohydrate degradation; glycolysis; pyruvate from D-glyceraldehyde 3-phosphate: step 2/5. Its function is as follows. Catalyzes one of the two ATP producing reactions in the glycolytic pathway via the reversible conversion of 1,3-diphosphoglycerate to 3-phosphoglycerate. Both L- and D- forms of purine and pyrimidine nucleotides can be used as substrates, but the activity is much lower on pyrimidines. Negatively regulates the biosynthesis of acetyl-CoA from pyruvate in the mitochondrion. The protein is Phosphoglycerate kinase (PGK1) of Komagataella pastoris (Yeast).